A 298-amino-acid chain; its full sequence is uncharacterized protein (298 aa).

10 helical membrane-spanning segments follow: residues 5–25, 36–56, 76–96, 97–117, 124–144, 147–167, 181–201, 216–236, 244–264, and 272–292; these read ILFG…MSAF, MENV…IYPF, VVVG…ISLA, TATA…PLLL, STLI…DPSV, VGPV…LAYI, VILA…FIDI, ILWI…LTYA, IIAP…LYLG, and SSLG…PALL. Positions 17-141 constitute an EamA 1 domain; the sequence is LCFGIMSAFV…GIVGVVLISD (125 aa). An EamA 2 domain is found at 183 to 288; sequence LAFAFGMSLL…ILCSGLLIAL (106 aa).

This sequence belongs to the EamA transporter family.

The protein localises to the cell membrane. This is an uncharacterized protein from Helicobacter pylori (strain ATCC 700392 / 26695) (Campylobacter pylori).